Reading from the N-terminus, the 364-residue chain is Caveolae-associated protein 4 (364 aa).

Residues 1 to 24 are disordered; sequence MEHNGSASNADKIHQNRLSSVTED. Positions 44–77 form a coiled coil; the sequence is VDSVQASQKRIEERHREMENAIKSVQIDLLKLSQ. Ser172 and Ser173 each carry phosphoserine. A coiled-coil region spans residues 202–226; that stretch reads FSKENMQKTRQNLDKKVNRIRTRIV. The segment covering 231–256 has biased composition (basic and acidic residues); that stretch reads RERLRQSGERLRQSGERLRQSGERFK. Disordered regions lie at residues 231–283 and 311–339; these read RERL…RTVA and SDEL…TPEP. The residue at position 326 (Tyr326) is a Phosphotyrosine. The residue at position 336 (Thr336) is a Phosphothreonine. Residue Ser355 is modified to Phosphoserine.

The protein belongs to the CAVIN family. In terms of assembly, component of the CAVIN complex composed of CAVIN1, CAVIN2, CAVIN3 and CAVIN4. Interacts with CAVIN1, ADRA1A and ADRA1B. Interacts with CAVIN2; this augments the transactivation of NPPA. Interacts with CAV3. Interacts with MAPK1 and MAPK3.

The protein localises to the cytoplasm. It is found in the myofibril. Its subcellular location is the sarcomere. It localises to the cytosol. The protein resides in the cell membrane. The protein localises to the sarcolemma. It is found in the membrane. Its subcellular location is the caveola. Its function is as follows. Modulates the morphology of formed caveolae in cardiomyocytes, but is not required for caveolar formation. Facilitates the recruitment of MAPK1/3 to caveolae within cardiomyocytes and regulates alpha-1 adrenergic receptor-induced hypertrophic responses in cardiomyocytes through MAPK1/3 activation. Contributes to proper membrane localization and stabilization of caveolin-3 (CAV3) in cardiomyocytes. Induces RHOA activation and activates NPPA transcription and myofibrillar organization through the Rho/ROCK signaling pathway. This Homo sapiens (Human) protein is Caveolae-associated protein 4.